The following is a 467-amino-acid chain: Glycine--tRNA ligase (467 aa).

Residues R100 and E175 each coordinate substrate. ATP contacts are provided by residues 207-209 (RNE), 217-222 (FRTREF), 291-292 (EL), and 335-338 (GADR). 222–226 (FEQME) is a substrate binding site. 331 to 335 (EPSLG) lines the substrate pocket.

The protein belongs to the class-II aminoacyl-tRNA synthetase family. As to quaternary structure, homodimer.

The protein resides in the cytoplasm. The catalysed reaction is tRNA(Gly) + glycine + ATP = glycyl-tRNA(Gly) + AMP + diphosphate. Functionally, catalyzes the attachment of glycine to tRNA(Gly). The polypeptide is Glycine--tRNA ligase (Clostridium perfringens (strain 13 / Type A)).